Consider the following 248-residue polypeptide: Probable phosphatase VPA0505 (248 aa).

Zn(2+) is bound by residues His-8, His-10, His-16, His-41, Glu-74, His-102, His-132, Asp-194, and His-196.

Belongs to the PHP family. Zn(2+) serves as cofactor.

This is Probable phosphatase VPA0505 from Vibrio parahaemolyticus serotype O3:K6 (strain RIMD 2210633).